Reading from the N-terminus, the 334-residue chain is Phosphate acyltransferase (334 aa).

Belongs to the PlsX family. Homodimer. Probably interacts with PlsY.

It localises to the cytoplasm. It carries out the reaction a fatty acyl-[ACP] + phosphate = an acyl phosphate + holo-[ACP]. The protein operates within lipid metabolism; phospholipid metabolism. In terms of biological role, catalyzes the reversible formation of acyl-phosphate (acyl-PO(4)) from acyl-[acyl-carrier-protein] (acyl-ACP). This enzyme utilizes acyl-ACP as fatty acyl donor, but not acyl-CoA. The sequence is that of Phosphate acyltransferase from Clostridium kluyveri (strain NBRC 12016).